Consider the following 336-residue polypeptide: Anthranilate phosphoribosyltransferase (336 aa).

5-phospho-alpha-D-ribose 1-diphosphate contacts are provided by residues G82, G85–D86, T90, N92–T95, K110–S118, and S122. Residue G82 coordinates anthranilate. S94 contacts Mg(2+). N113 lines the anthranilate pocket. R168 contacts anthranilate. 2 residues coordinate Mg(2+): D227 and E228.

This sequence belongs to the anthranilate phosphoribosyltransferase family. In terms of assembly, homodimer. The cofactor is Mg(2+).

It catalyses the reaction N-(5-phospho-beta-D-ribosyl)anthranilate + diphosphate = 5-phospho-alpha-D-ribose 1-diphosphate + anthranilate. It functions in the pathway amino-acid biosynthesis; L-tryptophan biosynthesis; L-tryptophan from chorismate: step 2/5. In terms of biological role, catalyzes the transfer of the phosphoribosyl group of 5-phosphorylribose-1-pyrophosphate (PRPP) to anthranilate to yield N-(5'-phosphoribosyl)-anthranilate (PRA). The protein is Anthranilate phosphoribosyltransferase of Leptospira borgpetersenii serovar Hardjo-bovis (strain JB197).